A 138-amino-acid chain; its full sequence is ATP synthase epsilon chain (138 aa).

It belongs to the ATPase epsilon chain family. In terms of assembly, F-type ATPases have 2 components, CF(1) - the catalytic core - and CF(0) - the membrane proton channel. CF(1) has five subunits: alpha(3), beta(3), gamma(1), delta(1), epsilon(1). CF(0) has three main subunits: a, b and c.

Its subcellular location is the cell inner membrane. Its function is as follows. Produces ATP from ADP in the presence of a proton gradient across the membrane. The protein is ATP synthase epsilon chain of Geobacter sulfurreducens (strain ATCC 51573 / DSM 12127 / PCA).